A 1165-amino-acid polypeptide reads, in one-letter code: uncharacterized protein (1165 aa).

The disordered stretch occupies residues 422–442; it reads EAAPPRPPRKSKAPEPTGDKA.

This is an uncharacterized protein from Frog virus 3 (isolate Goorha) (FV-3).